A 127-amino-acid polypeptide reads, in one-letter code: Fluoride-specific ion channel FluC (127 aa).

The next 4 membrane-spanning stretches (helical) occupy residues 4–24, 36–56, 68–88, and 99–119; these read SILA…FLGL, GTLL…AYFA, LIIT…AEVV, and AAGA…LGLF. Positions 75 and 78 each coordinate Na(+).

Belongs to the fluoride channel Fluc/FEX (TC 1.A.43) family.

The protein resides in the cell inner membrane. The catalysed reaction is fluoride(in) = fluoride(out). Na(+) is not transported, but it plays an essential structural role and its presence is essential for fluoride channel function. Fluoride-specific ion channel. Important for reducing fluoride concentration in the cell, thus reducing its toxicity. The polypeptide is Fluoride-specific ion channel FluC (Pseudomonas aeruginosa (strain UCBPP-PA14)).